A 121-amino-acid polypeptide reads, in one-letter code: Small ribosomal subunit protein uS13 (121 aa).

Residues 97–121 form a disordered region; sequence VRGQRTRTNARTRRGARKTVAGKKK. A compositionally biased stretch (basic residues) spans 100-121; the sequence is QRTRTNARTRRGARKTVAGKKK.

This sequence belongs to the universal ribosomal protein uS13 family. In terms of assembly, part of the 30S ribosomal subunit. Forms a loose heterodimer with protein S19. Forms two bridges to the 50S subunit in the 70S ribosome.

Functionally, located at the top of the head of the 30S subunit, it contacts several helices of the 16S rRNA. In the 70S ribosome it contacts the 23S rRNA (bridge B1a) and protein L5 of the 50S subunit (bridge B1b), connecting the 2 subunits; these bridges are implicated in subunit movement. Contacts the tRNAs in the A and P-sites. In Prochlorococcus marinus (strain MIT 9303), this protein is Small ribosomal subunit protein uS13.